Consider the following 859-residue polypeptide: Suppressor protein MPT5 (859 aa).

The tract at residues 85–108 is disordered; that stretch reads MNNTSTSNSANSFSPNPNAASNST. Residues 86–108 are compositionally biased toward low complexity; it reads NNTSTSNSANSFSPNPNAASNST. The 409-residue stretch at 188–596 folds into the PUM-HD domain; that stretch reads DNSSFGLSSS…KIKLKVKAYA (409 aa). 8 Pumilio repeats span residues 209–247, 248–283, 284–320, 325–362, 363–400, 401–438, 439–474, and 503–539; these read PLRD…LMYE, QIKP…LLIQ, TIYP…LIIK, EFTS…FIID, AIVE…KISV, KIVQ…ELFN, RLSN…FIVN, and DIFT…AYNK. The tract at residues 620–658 is disordered; the sequence is TINNENKNPHNKNSHNHNHNHNHNHAHNNNNNNNQKSHT. Residues 628–645 are compositionally biased toward basic residues; that stretch reads PHNKNSHNHNHNHNHNHA. A phosphoserine mark is found at Ser662, Ser834, and Ser838.

It is found in the cytoplasm. In terms of biological role, RNA-binding protein involved in post-transcriptional regulation. Negatively regulates expression of HO by binding to the 3'-UTR of HO mRNA. Predominantly binds to mRNAs encoding chromatin modifiers and spindle pole body components. Recognizes and binds to 5'-TGTAA[CT]A[AT]TA-3' in the 3'-UTR of target mRNAs. Multicopy suppressor of POP2 mutation. Required for high temperature growth. This is Suppressor protein MPT5 (MPT5) from Saccharomyces cerevisiae (strain ATCC 204508 / S288c) (Baker's yeast).